The chain runs to 442 residues: Probable xylan O-acetyltransferase 8 (442 aa).

Residues 1–13 (MVQLPAMKRVKGR) lie on the Cytoplasmic side of the membrane. A helical; Signal-anchor for type II membrane protein transmembrane segment spans residues 14–34 (APLSVVVAIIGGLALAGIIFT). Residues 35 to 442 (EDLRGLTEVK…TWNRLLYAHL (408 aa)) lie on the Lumenal side of the membrane. N-linked (GlcNAc...) asparagine glycosylation occurs at N96. Disulfide bonds link C100–C151, C122–C187, C131–C426, and C344–C422. The GDS motif motif lies at 174 to 176 (GDS). The active-site Nucleophile is S176. N-linked (GlcNAc...) asparagine glycosylation is found at N217, N346, and N384. Catalysis depends on D421, which acts as the Proton donor. The DXXH motif motif lies at 421–424 (DCIH). H424 serves as the catalytic Proton acceptor.

This sequence belongs to the PC-esterase family. TBL subfamily.

The protein resides in the golgi apparatus membrane. Probable xylan acetyltransferase required for 2-O- and 3-O-monoacetylation of xylosyl residues in xylan. Possesses extremely low activity in vitro. The protein is Probable xylan O-acetyltransferase 8 of Oryza sativa subsp. japonica (Rice).